A 338-amino-acid chain; its full sequence is H(2)-forming methylenetetrahydromethanopterin dehydrogenase-related protein MJ0715 (338 aa).

This sequence belongs to the HMD family.

This Methanocaldococcus jannaschii (strain ATCC 43067 / DSM 2661 / JAL-1 / JCM 10045 / NBRC 100440) (Methanococcus jannaschii) protein is H(2)-forming methylenetetrahydromethanopterin dehydrogenase-related protein MJ0715.